The primary structure comprises 226 residues: 6-carboxyhexanoate--CoA ligase (226 aa).

The protein belongs to the BioW family. As to quaternary structure, homodimer. Mg(2+) serves as cofactor.

The catalysed reaction is heptanedioate + ATP + CoA = 6-carboxyhexanoyl-CoA + AMP + diphosphate. It functions in the pathway metabolic intermediate metabolism; pimeloyl-CoA biosynthesis; pimeloyl-CoA from pimelate: step 1/1. Functionally, catalyzes the transformation of pimelate into pimeloyl-CoA with concomitant hydrolysis of ATP to AMP. In Methanocaldococcus infernus (strain DSM 11812 / JCM 15783 / ME), this protein is 6-carboxyhexanoate--CoA ligase.